A 600-amino-acid polypeptide reads, in one-letter code: Elongation factor 4 (600 aa).

Residues 4-186 enclose the tr-type G domain; it reads SKIRNFSIIA…AIVNKIPAPY (183 aa). Residues 16–21 and 133–136 contribute to the GTP site; these read DHGKST and NKVD.

Belongs to the TRAFAC class translation factor GTPase superfamily. Classic translation factor GTPase family. LepA subfamily.

Its subcellular location is the cell membrane. The enzyme catalyses GTP + H2O = GDP + phosphate + H(+). Functionally, required for accurate and efficient protein synthesis under certain stress conditions. May act as a fidelity factor of the translation reaction, by catalyzing a one-codon backward translocation of tRNAs on improperly translocated ribosomes. Back-translocation proceeds from a post-translocation (POST) complex to a pre-translocation (PRE) complex, thus giving elongation factor G a second chance to translocate the tRNAs correctly. Binds to ribosomes in a GTP-dependent manner. The chain is Elongation factor 4 from Mesoplasma florum (strain ATCC 33453 / NBRC 100688 / NCTC 11704 / L1) (Acholeplasma florum).